Consider the following 107-residue polypeptide: uncharacterized protein (107 aa).

A signal peptide spans 1–20 (MYIKGRLIFFFVVLVIALCS).

This is an uncharacterized protein from Listeria monocytogenes serovar 1/2a (strain ATCC BAA-679 / EGD-e).